Consider the following 151-residue polypeptide: MRCPFCGEADTQVKDSRPTEDGAAIRRRRFCPQCSQRFTTIERVQLRELVVVKADQRRVAFDRDKLARSIRTALRKRPVDDERIERIVNGIVRKLEASGEAEIPSSEIGELVMDTLKEVDAVAYVRFASVYRDFREAKDFKAFLGTMDPSK.

Residues 1–21 (MRCPFCGEADTQVKDSRPTED) are disordered. Residues 3-34 (CPFCGEADTQVKDSRPTEDGAAIRRRRFCPQC) fold into a zinc finger. The span at 11–21 (TQVKDSRPTED) shows a compositional bias: basic and acidic residues. The ATP-cone domain maps to 49 to 139 (LVVVKADQRR…VYRDFREAKD (91 aa)).

Belongs to the NrdR family. It depends on Zn(2+) as a cofactor.

Its function is as follows. Negatively regulates transcription of bacterial ribonucleotide reductase nrd genes and operons by binding to NrdR-boxes. The polypeptide is Transcriptional repressor NrdR (Acidiphilium cryptum (strain JF-5)).